The following is a 640-amino-acid chain: Biosynthetic arginine decarboxylase (640 aa).

K109 carries the N6-(pyridoxal phosphate)lysine modification. 291–301 (LDVGGGLGVDY) serves as a coordination point for substrate.

This sequence belongs to the Orn/Lys/Arg decarboxylase class-II family. SpeA subfamily. Mg(2+) is required as a cofactor. It depends on pyridoxal 5'-phosphate as a cofactor.

The enzyme catalyses L-arginine + H(+) = agmatine + CO2. It functions in the pathway amine and polyamine biosynthesis; agmatine biosynthesis; agmatine from L-arginine: step 1/1. In terms of biological role, catalyzes the biosynthesis of agmatine from arginine. The polypeptide is Biosynthetic arginine decarboxylase (Synechococcus sp. (strain RCC307)).